Reading from the N-terminus, the 440-residue chain is NADH-quinone oxidoreductase subunit D 1 (440 aa).

Belongs to the complex I 49 kDa subunit family. In terms of assembly, NDH-1 is composed of 14 different subunits. Subunits NuoB, C, D, E, F, and G constitute the peripheral sector of the complex.

The protein localises to the cell membrane. It carries out the reaction a quinone + NADH + 5 H(+)(in) = a quinol + NAD(+) + 4 H(+)(out). In terms of biological role, NDH-1 shuttles electrons from NADH, via FMN and iron-sulfur (Fe-S) centers, to quinones in the respiratory chain. The immediate electron acceptor for the enzyme in this species is believed to be a menaquinone. Couples the redox reaction to proton translocation (for every two electrons transferred, four hydrogen ions are translocated across the cytoplasmic membrane), and thus conserves the redox energy in a proton gradient. The polypeptide is NADH-quinone oxidoreductase subunit D 1 (Streptomyces griseus subsp. griseus (strain JCM 4626 / CBS 651.72 / NBRC 13350 / KCC S-0626 / ISP 5235)).